A 114-amino-acid polypeptide reads, in one-letter code: RNA polymerase-binding protein RbpA (114 aa).

Belongs to the RNA polymerase-binding protein RbpA family. Monomer. Forms a complex with the RNAP catalytic core, specifically with the beta subunit (RpoB); its binding site may overlap with that of Rif. May bind free principal sigma factors.

Binds to RNA polymerase (RNAP), probably stimulating transcriptions from principal, but not alternative sigma factor promoters. Partially restores transcription in the presence of rifampicin (Rif) in vitro; overexpression leads to an increase in the Rif tolerance in vivo, with smaller colonies. Seems to act by removing Rif from its binding site and preventing its further binding. No longer stimulates transcription in Rif-resistant RNA polymerase (with mutations in rpoB). This Mycolicibacterium smegmatis (strain ATCC 700084 / mc(2)155) (Mycobacterium smegmatis) protein is RNA polymerase-binding protein RbpA.